A 709-amino-acid polypeptide reads, in one-letter code: Copper amine oxidase vicK1 (709 aa).

A signal peptide spans Met1–Gln20. Asp365 functions as the Proton acceptor in the catalytic mechanism. A disulfide bond links Cys383 and Cys408. Tyr448 functions as the Schiff-base intermediate with substrate; via topaquinone in the catalytic mechanism. Tyr448 bears the 2',4',5'-topaquinone mark. Cu cation-binding residues include His496 and His498. Ca(2+) contacts are provided by Asp505, Leu506, Asp507, Glu548, Phe641, Glu645, Asp651, and Leu652. His662 serves as a coordination point for Cu cation.

This sequence belongs to the copper/topaquinone oxidase family. In terms of assembly, homodimer; disulfide-linked. Cu cation serves as cofactor. The cofactor is Ca(2+). L-topaquinone is required as a cofactor. Topaquinone (TPQ) is generated by copper-dependent autoxidation of a specific tyrosyl residue.

The protein operates within mycotoxin biosynthesis. Functionally, copper amine oxidase, part of the gene cluster that mediates the biosynthesis of the secondary metabolite victorin, the molecular basis for Victoria blight of oats. Within the pathway, vicK1 catalyzes the oxidative deamination of the N-terminal glycyl moiety of the hexapeptides in order to produce the active glyoxylate form victorins. The pathway starts with the processing of the precursor vicA1 by several endopeptidases including kexin proteases as well as the cluster-specific S28 family peptidases vicPa and vicPb to produce 7 identical copies of the hexapeptide Gly-Leu-Lys-Leu-Ala-Phe. After being excised from the precursor peptide, the core peptides are cyclized and modified post-translationally by enzymes encoded within the gene cluster. The ustYa family oxidase vicYb is required for the formation of the macrocycle in victorin and the copper amine oxidases (CAOs) vicK1 and vicK2 are responsible for converting victorin to the active form by oxidizing the N-terminal glycyl residue in the peptides to glyoxylate. Relaxed substrate specificity of enzymes in the victorin biosynthetic pathway results in a metabolic grid that produces a set of analogs including victorinines B, C, E or HV-toxin M. The protein is Copper amine oxidase vicK1 of Bipolaris victoriae (strain FI3) (Victoria blight of oats agent).